The sequence spans 424 residues: Serine hydroxymethyltransferase (424 aa).

Residues Leu123 and 127 to 129 (GHL) each bind (6S)-5,6,7,8-tetrahydrofolate. Lys232 bears the N6-(pyridoxal phosphate)lysine mark. Glu245 is a (6S)-5,6,7,8-tetrahydrofolate binding site.

The protein belongs to the SHMT family. As to quaternary structure, homodimer. The cofactor is pyridoxal 5'-phosphate.

It localises to the cytoplasm. The enzyme catalyses (6R)-5,10-methylene-5,6,7,8-tetrahydrofolate + glycine + H2O = (6S)-5,6,7,8-tetrahydrofolate + L-serine. Its pathway is one-carbon metabolism; tetrahydrofolate interconversion. The protein operates within amino-acid biosynthesis; glycine biosynthesis; glycine from L-serine: step 1/1. In terms of biological role, catalyzes the reversible interconversion of serine and glycine with tetrahydrofolate (THF) serving as the one-carbon carrier. This reaction serves as the major source of one-carbon groups required for the biosynthesis of purines, thymidylate, methionine, and other important biomolecules. Also exhibits THF-independent aldolase activity toward beta-hydroxyamino acids, producing glycine and aldehydes, via a retro-aldol mechanism. The sequence is that of Serine hydroxymethyltransferase from Kocuria rhizophila (strain ATCC 9341 / DSM 348 / NBRC 103217 / DC2201).